We begin with the raw amino-acid sequence, 394 residues long: DNA replication and repair protein RecF (394 aa).

30–37 contacts ATP; sequence GPNAAGKT.

This sequence belongs to the RecF family.

It is found in the cytoplasm. Functionally, the RecF protein is involved in DNA metabolism; it is required for DNA replication and normal SOS inducibility. RecF binds preferentially to single-stranded, linear DNA. It also seems to bind ATP. The polypeptide is DNA replication and repair protein RecF (Roseiflexus castenholzii (strain DSM 13941 / HLO8)).